The sequence spans 463 residues: Hexokinase-7 (463 aa).

Residues 7–456 (AAAEQVVAAL…SGLGAALIAA (450 aa)) form the Hexokinase domain. The tract at residues 62–199 (NGTEEGLFYA…GLDMRVSALI (138 aa)) is hexokinase small subdomain. Residues glycine 76, threonine 77, and asparagine 78 each contribute to the ADP site. The D-glucose site is built by threonine 165, lysine 166, asparagine 200, and aspartate 201. Residues 200-445 (NDTVGTLAAG…KSVAVKLAND (246 aa)) are hexokinase large subdomain. Position 224 (threonine 224) interacts with ADP. Positions 227, 255, and 286 each coordinate D-glucose. ADP is bound at residue glycine 410.

It belongs to the hexokinase family. In terms of tissue distribution, expressed in roots, leaves, flowers, immature seeds and seed coat.

It is found in the cytoplasm. The enzyme catalyses a D-hexose + ATP = a D-hexose 6-phosphate + ADP + H(+). The catalysed reaction is D-fructose + ATP = D-fructose 6-phosphate + ADP + H(+). It carries out the reaction D-glucose + ATP = D-glucose 6-phosphate + ADP + H(+). The protein operates within carbohydrate metabolism; hexose metabolism. It participates in carbohydrate degradation; glycolysis; D-glyceraldehyde 3-phosphate and glycerone phosphate from D-glucose: step 1/4. Fructose and glucose phosphorylating enzyme. Functions in sugar signaling via a glycolysis-dependent manner under aerobic conditions, but its signaling role is suppressed when oxygen is deficient. The sequence is that of Hexokinase-7 (HXK7) from Oryza sativa subsp. japonica (Rice).